A 476-amino-acid chain; its full sequence is MQISSSSFITKFTNLHMVRSTSDHHQWRHNYNLKQLFIPNLSVSNSQHLPLNQSVAAIVFGGGSDSELYPLTKTRSKGAIPIAANYRLIDAVISNCINSGITKIYAITQFNSTSLNSHLSKAYSGFGLGKDRFVEVIAAYQSLEDQGWFQGTADAIRRCLWVFEEFPVTEFLVLPGHHLYKMDYKMLIEDHRRSRADITIVGLSSVTDHDFGFGFMEVDSTNAVTRFTIKGQQDLISVANRTATRSDGTSSCSVPSAGIYVIGREQMVKLLRECLIKSKDLASEIIPGAISEGMKVKAHMFDGYWEDVRSIGAYYRANMESIKSYRFYDRQCPLYTMPRCLPPSSMSVAVITNSIIGDGCILDKCVIRGSVVGMRTRIADEVIVEDSIIVGSDIYEMEEDVRRKGKEKKIEIRIGIGEKSRIRRAIVDKNARIGKNVMIINRDNVEEGNREAQGYVIREGIIIILRNAVIPNDSIL.

The N-terminal 55 residues, Met-1–Val-55, are a transit peptide targeting the chloroplast.

Belongs to the bacterial/plant glucose-1-phosphate adenylyltransferase family. Heterotetramer. As to expression, expressed at very low levels in leaves, inflorescences, fruits, and roots.

The protein resides in the plastid. It is found in the chloroplast. The polypeptide is Inactive glucose-1-phosphate adenylyltransferase small subunit 2, chloroplastic (Arabidopsis thaliana (Mouse-ear cress)).